The sequence spans 174 residues: Phytochrome-interacting ankyrin-repeat protein 2 (174 aa).

A compositionally biased stretch (low complexity) spans 1–13 (MLQEPSAAFSLRR). The disordered stretch occupies residues 1–29 (MLQEPSAAFSLRRNSFRRRSPRSNVDDRG). A Phosphoserine modification is found at S15. 3 ANK repeats span residues 28–57 (RGWNPLHIKARKGDLKSVKQLLDQGMDVNA), 65–94 (KGVSALHLAAEGGHIEVMDLLLERGANIDA), and 100–129 (CGWTPLHAAAKERKREAVKFLVENGAFLAD).

In terms of assembly, interacts with phytochrome A (PHYA), both in Pr and Pfr forms. Binds to PIF3, a repressor of photomorphogenesis in response to phytochrome-mediated light signaling; this interaction may trigger the repression of PHYA-mediated PIF3 phosphorylation. Interacts with SIGE/SIG5 in mitochondrion. Interacts with RPS9M (via C terminus). Post-translationally, phosphorylated by PHYA. As to expression, mostly expressed in flowers, cotyledons, leaves and siliques, and, to a lower extent, in roots and stems. Also detected at low levels in seedlings grown in continuous dark or light conditions. Expressed in male and female gametophytes.

Its subcellular location is the cytoplasm. It is found in the nucleus. The protein resides in the mitochondrion. In terms of biological role, promotes anthocyanin accumulation through interaction with PHYA, especially in response to far-red light, high light and sucrose treatment, probably by triggering A3G2XYLT/UF3GT expression. Required for gametophytes development as well as male-female gamete recognition during fertilization, possibly by regulating mitochondrial gene expression. Represses PHYA-mediated PIF3 phosphorylation. The polypeptide is Phytochrome-interacting ankyrin-repeat protein 2 (Arabidopsis thaliana (Mouse-ear cress)).